The chain runs to 602 residues: Multidrug and toxin extrusion protein 2 (602 aa).

The Cytoplasmic portion of the chain corresponds to 1-33 (MDSLQDTVALDHGGCCPALSRLVPRGFGTEMWT). Residues 34–54 (LFALSGPLFLFQVLTFMIYIV) form a helical membrane-spanning segment. The Extracellular portion of the chain corresponds to 55-66 (STVFCGHLGKVE). A helical membrane pass occupies residues 67–87 (LASVTLAVAFVNVCGVSVGVG). Over 88–119 (LSSACDTLMSQSFGSPNKKHVGVILQRGALVL) the chain is Cytoplasmic. A helical transmembrane segment spans residues 120 to 140 (LLCCLPCWALFLNTQHILLLF). The Extracellular segment spans residues 141 to 153 (RQDPDVSRLTQDY). Residues 154 to 174 (VMIFIPGLPVIFLYNLLAKYL) traverse the membrane as a helical segment. The Cytoplasmic portion of the chain corresponds to 175–219 (QNQGWLKGQEEESPFQTPGLSILHPSHSHLSRASFHLFQKITWPQ). A helical transmembrane segment spans residues 220 to 240 (VLSGVVGNCVNGVANYALVSV). The Extracellular portion of the chain corresponds to 241–248 (LNLGVRGS). The helical transmembrane segment at 249 to 269 (AYANIISQFAQTVFLLLYIVL) threads the bilayer. Residues 270–289 (KKLHLETWAGWSSQCLQDWG) are Cytoplasmic-facing. A helical transmembrane segment spans residues 290-309 (PFFSLAVPSMLMICVEWWAY). Residues 310 to 327 (EIGSFLMGLLSVVDLSAQ) are Extracellular-facing. A helical membrane pass occupies residues 328–348 (AVIYEVATVTYMIPLGLSIGV). Residues 349-368 (CVRVGMALGAADTVQAKRSA) lie on the Cytoplasmic side of the membrane. Residues 369–389 (VSGVLSIVGISLVLGTLISIL) form a helical membrane-spanning segment. The Extracellular segment spans residues 390-402 (KNQLGHIFTNDED). Residues 403-423 (VIALVSQVLPVYSVFHVFEAI) form a helical membrane-spanning segment. Residues 424–442 (CCVYGGVLRGTGKQAFGAA) lie on the Cytoplasmic side of the membrane. A helical transmembrane segment spans residues 443 to 463 (VNAITYYIIGLPLGILLTFVV). The Extracellular segment spans residues 464 to 466 (RMR). The chain crosses the membrane as a helical span at residues 467-487 (IMGLWLGMLACVFLATAAFVA). Topologically, residues 488-578 (YTARLDWKLA…LSVKQLVIRR (91 aa)) are cytoplasmic. The segment at 503–529 (KHSGRQQQQRAESTATRPGPEKAVLSS) is disordered. Positions 507 to 518 (RQQQQRAESTAT) are enriched in polar residues. A helical transmembrane segment spans residues 579–599 (GAALGAASATLMVGLTVRILA). The Extracellular portion of the chain corresponds to 600–602 (TRH).

It belongs to the multi antimicrobial extrusion (MATE) (TC 2.A.66.1) family. As to expression, high expression in kidney. Very small expression in adrenal gland and lung. In terms of tissue distribution, high expression in kidney. Very small expression in brain and testis. Ubiquitously expressed in all tissues examined except the kidney.

It localises to the cell membrane. The protein localises to the apical cell membrane. The enzyme catalyses thiamine(out) + H(+)(in) = thiamine(in) + H(+)(out). It carries out the reaction estrone 3-sulfate(in) + H(+)(out) = estrone 3-sulfate(out) + H(+)(in). The catalysed reaction is creatinine(in) + H(+)(out) = creatinine(out) + H(+)(in). Multidrug efflux pump that functions as a H(+)/organic cation antiporter. Mediates the efflux of cationic compounds, such as the model cations, tetraethylammonium (TEA) and 1-methyl-4-phenylpyridinium (MPP+), the platinum-based drug oxaliplatin or weak bases that are positively charged at physiological pH, cimetidine, the platinum-based drugs cisplatin and oxaliplatin or the antidiabetic drug metformin. Mediates the efflux of endogenous compounds such as, creatinine, thiamine and estrone-3-sulfate. Plays a physiological role in the excretion of drugs, toxins and endogenous metabolites through the kidney. In terms of biological role, non-functional protein. In Homo sapiens (Human), this protein is Multidrug and toxin extrusion protein 2.